Here is a 1218-residue protein sequence, read N- to C-terminus: NACHT, LRR and PYD domains-containing protein 1 allele 2 (1218 aa).

A disordered region spans residues 1–61 (MEESQSKQES…SLPGWSSTSK (61 aa)). Over residues 7–29 (KQESNTRVAQHGSQQDVDPTFQT) the composition is skewed to polar residues. Residues 175–484 (QLVIIEGAAG…EFFAAMSYIL (310 aa)) form the NACHT domain. Position 181–188 (181–188 (GAAGIGKS)) interacts with ATP. LRR repeat units follow at residues 343–364 (KERN…LTLC), 673–693 (NLEE…RSLC), and 730–750 (RLAE…RQLC). The span at 799–815 (TMPTENTDGEESLTSSK) shows a compositional bias: polar residues. The tract at residues 799-842 (TMPTENTDGEESLTSSKQQQQQSGDKHMEPLGTDDDFWGPSGPV) is disordered. The interval 835-968 (FWGPSGPVST…HFAVLENPSF (134 aa)) is ZU5. In terms of domain architecture, FIIND spans 835-1118 (FWGPSGPVST…LRPALPRMAS (284 aa)). Residues 969–1118 (SPMGVLLRMI…LRPALPRMAS (150 aa)) form a UPA region. In terms of domain architecture, CARD spans 1122-1211 (DAPALLHFVD…HLIMDLLEKS (90 aa)).

Belongs to the NLRP family. In terms of assembly, interacts (via LRR repeats) with BCL2 and BCL2L1 (via the loop between motifs BH4 and BH3). Interacts with NOD2; this interaction is enhanced in the presence of muramyl dipeptide (MDP) and increases IL1B release. Interacts with EIF2AK2/PKR; this interaction requires EIF2AK2 activity, is accompanied by EIF2AK2 autophosphorylation and promotes inflammasome assembly in response to danger-associated signals. Interacts with MEFV; this interaction targets Nlrp1a to degradation by autophagy, hence preventing excessive IL1B- and IL18-mediated inflammation. Interacts with DPP9; leading to inhibit activation of the inflammasome. DPP9 acts via formation of a ternary complex, composed of a DPP9 homodimer, one full-length NLRP1 protein, and one cleaved C-terminus of Nlrp1a (NACHT, LRR and PYD domains-containing protein 1a, C-terminus). Interacts with DPP8; leading to inhibit activation of the inflammasome, probably via formation of a ternary complex with DPP8. As to quaternary structure, interacts with the C-terminal part of Nlrp1a (NACHT, LRR and PYD domains-containing protein 1a, C-terminus) in absence of pathogens and other damage-associated signals. Interacts with the N-terminal part of Nlrp1a (NACHT, LRR and PYD domains-containing protein 1a, N-terminus) in absence of pathogens and other damage-associated signals. Homomultimer; forms the Nlrp1a inflammasome polymeric complex, a filament composed of homopolymers of this form in response to pathogens and other damage-associated signals. The Nlrp1a inflammasome polymeric complex directly recruits pro-caspase-1 (proCASP1) independently of PYCARD/ASC. Interacts (via CARD domain) with CASP1 (via CARD domain); leading to CASP1 activation. In terms of processing, autocatalytically cleaved. Autocatalytic cleavage in FIIND region occurs constitutively, prior to activation signals, and is required for inflammasome activity (IL1B release), possibly by facilitating CASP1 binding. Both N- and C-terminal parts remain associated non-covalently. Post-translationally, (Microbial infection) Cleavage by B.anthracis lethal toxin (LT) endopeptidase promotes ubiquitination and degradation of the N-terminal part, releasing the cleaved C-terminal part of the protein (NACHT, LRR and PYD domains-containing protein 1a, C-terminus), which polymerizes and forms the Nlrp1a inflammasome. Ubiquitinated in response to pathogen-associated signals, leading to its degradation by the proteasome and subsequent release of the cleaved C-terminal part of the protein (NACHT, LRR and PYD domains-containing protein 1a, C-terminus), which polymerizes and forms the Nlrp1a inflammasome.

It is found in the cytoplasm. The protein resides in the cytosol. Its subcellular location is the nucleus. The protein localises to the inflammasome. Activated by cleavage by B.anthracis lethal toxin (LT) endopeptidase. Cleavage by LT promotes ubiquitination and degradation of the N-terminal part, releasing the cleaved C-terminal part of the protein (NACHT, LRR and PYD domains-containing protein 1a, C-terminus), which polymerizes and forms the Nlrp1a inflammasome. Nlrp1a inflammasome is inhibited by DPP8 and DPP9, which sequester the C-terminal fragment of Nlrp1a (NACHT, LRR and PYD domains-containing protein 1a, C-terminus) in a ternary complex, thereby preventing Nlrp1a oligomerization and activation. Nlrp1a inflammasome is weakly activated by Val-boroPro (Talabostat, PT-100), an inhibitor of dipeptidyl peptidases DPP8 and DPP9. Val-boroPro relieves inhibition of DPP8 and/or DPP9 by promoting disruption of the ternary complex, releasing its C-terminal part from autoinhibition. Weakly activated by Toxoplasma gondii. Its function is as follows. Acts as the sensor component of the Nlrp1a inflammasome, which mediates inflammasome activation in response to various pathogen-associated signals, leading to subsequent pyroptosis. Inflammasomes are supramolecular complexes that assemble in the cytosol in response to pathogens and other damage-associated signals and play critical roles in innate immunity and inflammation. Acts as a recognition receptor (PRR): recognizes specific pathogens and other damage-associated signals, such as B.anthracis lethal toxin (LT) or Val-boroPro inhibitor, and mediates the formation of the inflammasome polymeric complex. In response to pathogen-associated signals, the N-terminal part of Nlrp1a is degraded by the proteasome, releasing the cleaved C-terminal part of the protein (NACHT, LRR and PYD domains-containing protein 1a, C-terminus), which polymerizes to initiate the formation of the inflammasome complex: the inflammasome directly recruits pro-caspase-1 (proCASP1) independently of PYCARD/ASC and promotes caspase-1 (CASP1) activation, which subsequently cleaves and activates inflammatory cytokines IL1B and IL18 and gasdermin-D (GSDMD), leading to pyroptosis. In the absence of GSDMD expression, the Nlrp1a inflammasome is able to recruit and activate CASP8, leading to activation of gasdermin-E (GSDME). Constitutes the precursor of the Nlrp1a inflammasome, which mediates autoproteolytic processing within the FIIND domain to generate the N-terminal and C-terminal parts, which are associated non-covalently in absence of pathogens and other damage-associated signals. Functionally, regulatory part that prevents formation of the Nlrp1a inflammasome: in absence of pathogens and other damage-associated signals, interacts with the C-terminal part of Nlrp1a (NACHT, LRR and PYD domains-containing protein 1a, C-terminus), preventing activation of the Nlrp1a inflammasome. In response to pathogen-associated signals, this part is ubiquitinated by the N-end rule pathway and degraded by the proteasome, releasing the cleaved C-terminal part of the protein, which polymerizes and forms the Nlrp1a inflammasome. In terms of biological role, constitutes the active part of the Nlrp1a inflammasome. In absence of pathogens and other damage-associated signals, interacts with the N-terminal part of Nlrp1a (NACHT, LRR and PYD domains-containing protein 1a, N-terminus), preventing activation of the Nlrp1a inflammasome. In response to pathogen-associated signals, the N-terminal part of Nlrp1a is degraded by the proteasome, releasing this form, which polymerizes to form the Nlrp1a inflammasome complex: the Nlrp1a inflammasome complex then directly recruits pro-caspase-1 (proCASP1) and promotes caspase-1 (CASP1) activation, leading to gasdermin-D (GSDMD) cleavage and subsequent pyroptosis. This chain is NACHT, LRR and PYD domains-containing protein 1 allele 2, found in Rattus norvegicus (Rat).